Consider the following 463-residue polypeptide: tRNA modification GTPase MnmE (463 aa).

(6S)-5-formyl-5,6,7,8-tetrahydrofolate contacts are provided by Arg-29, Glu-91, and Arg-130. Residues 225–384 (GLKVAIVGRP…LETAILEIVQ (160 aa)) enclose the TrmE-type G domain. Residue Asn-235 participates in K(+) binding. Residues 235-240 (NVGKSS), 254-260 (TDLPGTT), and 279-282 (DTAG) contribute to the GTP site. A Mg(2+)-binding site is contributed by Ser-239. The K(+) site is built by Thr-254, Leu-256, and Thr-259. Thr-260 is a binding site for Mg(2+). Lys-463 is a (6S)-5-formyl-5,6,7,8-tetrahydrofolate binding site.

Belongs to the TRAFAC class TrmE-Era-EngA-EngB-Septin-like GTPase superfamily. TrmE GTPase family. Homodimer. Heterotetramer of two MnmE and two MnmG subunits. It depends on K(+) as a cofactor.

It localises to the cytoplasm. In terms of biological role, exhibits a very high intrinsic GTPase hydrolysis rate. Involved in the addition of a carboxymethylaminomethyl (cmnm) group at the wobble position (U34) of certain tRNAs, forming tRNA-cmnm(5)s(2)U34. In Trichormus variabilis (strain ATCC 29413 / PCC 7937) (Anabaena variabilis), this protein is tRNA modification GTPase MnmE.